The sequence spans 151 residues: Small ribosomal subunit protein bS6 (151 aa).

The disordered stretch occupies residues 97-151; that stretch reads EAEPSAMMQKRDRDDRKDRDRGDRPRRRDDDFGGGDRGDRGDRGDRPERNFGGEN. Positions 105–151 are enriched in basic and acidic residues; sequence QKRDRDDRKDRDRGDRPRRRDDDFGGGDRGDRGDRGDRPERNFGGEN.

Belongs to the bacterial ribosomal protein bS6 family.

Its function is as follows. Binds together with bS18 to 16S ribosomal RNA. This is Small ribosomal subunit protein bS6 from Methylorubrum extorquens (strain CM4 / NCIMB 13688) (Methylobacterium extorquens).